The sequence spans 324 residues: PDZ domain-containing protein MAGIX (324 aa).

Residues 1-26 (MDSRAGNTADPRGGRRGGGLQGSRSP) form a disordered region. In terms of domain architecture, PDZ spans 128-212 (SVELTRGPAG…HLCLVLQRPQ (85 aa)). Positions 216–241 (GSRIKEVGGHRKTDRSLDPRGSRVES) are enriched in basic and acidic residues. The tract at residues 216 to 263 (GSRIKEVGGHRKTDRSLDPRGSRVESRSTISPVHHRPKTRTSPRPSPE) is disordered. S261 bears the Phosphoserine mark.

In Mus musculus (Mouse), this protein is PDZ domain-containing protein MAGIX (Magix).